Consider the following 115-residue polypeptide: MSDLDIQIPTAFDPFAEANAGDSGAAAGSKDYVHVRIQQRNGRKSLTTVQGLKKEFSYSKILKDLKKEFCCNGTVVQDPELGQVIQLQGDQRKNVSNFLVQAGIVKKEHIKIHGF.

This sequence belongs to the SUI1 family.

In terms of biological role, probably involved in translation. This Zea mays (Maize) protein is Protein translation factor SUI1 homolog (TIF).